A 769-amino-acid chain; its full sequence is Sensor protein DivL (769 aa).

A helical membrane pass occupies residues 6–26; it reads LILAAAAGAVCLAISVALWSH. The Histidine kinase domain maps to 547–758; that stretch reads NVSYELRTPL…TFTCHLPETQ (212 aa). Tyr550 bears the Phosphotyrosine; by autocatalysis mark.

Post-translationally, autophosphorylated.

It is found in the cell membrane. The catalysed reaction is ATP + protein L-histidine = ADP + protein N-phospho-L-histidine.. Functionally, required for cell division and growth. It catalyzes the phosphorylation of CtrA and activates transcription in vitro of the cell cycle-regulated fliF promoter. The chain is Sensor protein DivL (divL) from Caulobacter vibrioides (strain ATCC 19089 / CIP 103742 / CB 15) (Caulobacter crescentus).